The primary structure comprises 200 residues: MAKVLVLYYSSYGHVETMAQHVAEGAKSVPGVEVTLKRVPETIPVDQAKAIGVKVDQAAPVATVDELANYDAIIFGTPTRFGNMAGQMRTFLDQTGGLWMKGALVGKIGSVFASTGTQHGGQETTITSFHTTLLHHGMVIVGVPYACSGLVDMKEITGGTPYGATTLAGADGSRQPSANELDIARYQGKHVAQLAAKLAA.

Residues 4–191 form the Flavodoxin-like domain; sequence VLVLYYSSYG…DIARYQGKHV (188 aa). FMN-binding positions include 10 to 15 and 79 to 81; these read SSYGHV and TRF. Tyrosine 12 provides a ligand contact to NAD(+). Tryptophan 99 contributes to the substrate binding site. Residues 114–120 and histidine 135 contribute to the FMN site; that span reads STGTQHG.

Belongs to the WrbA family. Requires FMN as cofactor.

It catalyses the reaction a quinone + NADH + H(+) = a quinol + NAD(+). The enzyme catalyses a quinone + NADPH + H(+) = a quinol + NADP(+). The protein is NAD(P)H dehydrogenase (quinone) of Burkholderia vietnamiensis (strain G4 / LMG 22486) (Burkholderia cepacia (strain R1808)).